Here is an 84-residue protein sequence, read N- to C-terminus: Protein Tlp homolog (84 aa).

Residues 1-20 (MGKEERYTKKPKPDDRSDNV) are disordered.

It belongs to the Tlp family.

The sequence is that of Protein Tlp homolog from Caldanaerobacter subterraneus subsp. tengcongensis (strain DSM 15242 / JCM 11007 / NBRC 100824 / MB4) (Thermoanaerobacter tengcongensis).